The chain runs to 465 residues: GTPase Der (465 aa).

2 consecutive EngA-type G domains span residues P27 to P190 and R202 to E375. GTP is bound by residues G33–S40, D80–W84, N142–D145, G208–S215, D255–I259, and N320–D323. Residues T376 to E458 form the KH-like domain.

This sequence belongs to the TRAFAC class TrmE-Era-EngA-EngB-Septin-like GTPase superfamily. EngA (Der) GTPase family. Associates with the 50S ribosomal subunit.

Its function is as follows. GTPase that plays an essential role in the late steps of ribosome biogenesis. The sequence is that of GTPase Der from Streptomyces coelicolor (strain ATCC BAA-471 / A3(2) / M145).